The following is an 82-amino-acid chain: Cell division topological specificity factor (82 aa).

It belongs to the MinE family.

In terms of biological role, prevents the cell division inhibition by proteins MinC and MinD at internal division sites while permitting inhibition at polar sites. This ensures cell division at the proper site by restricting the formation of a division septum at the midpoint of the long axis of the cell. In Hahella chejuensis (strain KCTC 2396), this protein is Cell division topological specificity factor.